Consider the following 181-residue polypeptide: CDP-diacylglycerol--glycerol-3-phosphate 3-phosphatidyltransferase (181 aa).

A run of 4 helical transmembrane segments spans residues 8 to 28, 35 to 55, 64 to 84, and 148 to 168; these read PNYL…TFYI, MLGA…GYIA, FGKM…IIML, and IIYL…LTII.

It belongs to the CDP-alcohol phosphatidyltransferase class-I family.

It localises to the cell membrane. It catalyses the reaction a CDP-1,2-diacyl-sn-glycerol + sn-glycerol 3-phosphate = a 1,2-diacyl-sn-glycero-3-phospho-(1'-sn-glycero-3'-phosphate) + CMP + H(+). It functions in the pathway phospholipid metabolism; phosphatidylglycerol biosynthesis; phosphatidylglycerol from CDP-diacylglycerol: step 1/2. This protein catalyzes the committed step to the synthesis of the acidic phospholipids. In Rickettsia bellii (strain RML369-C), this protein is CDP-diacylglycerol--glycerol-3-phosphate 3-phosphatidyltransferase (pgsA).